Consider the following 357-residue polypeptide: Protein pelota homolog (357 aa).

The protein belongs to the eukaryotic release factor 1 family. Pelota subfamily. Monomer. A divalent metal cation is required as a cofactor.

It localises to the cytoplasm. May function in recognizing stalled ribosomes, interact with stem-loop structures in stalled mRNA molecules, and effect endonucleolytic cleavage of the mRNA. May play a role in the release non-functional ribosomes and degradation of damaged mRNAs. Has endoribonuclease activity. The chain is Protein pelota homolog from Methanocella arvoryzae (strain DSM 22066 / NBRC 105507 / MRE50).